The chain runs to 352 residues: Photosystem II D2 protein (352 aa).

The Cytoplasmic portion of the chain corresponds to 1 to 31 (MTIAIGRAPAERGWFDILDDWLKRDRFVFVG). A helical transmembrane segment spans residues 32 to 53 (WSGILLFPCAYLALGGWLTGTT). Over 54 to 108 (FVTSWYTHGLASSYLEGCNFLTVAVSTPANSMGHSLLLLWGPEAQGDFTRWCQLG) the chain is Lumenal. The helical transmembrane segment at 109–131 (GLWTFIALHGAFGLIGFMLRQFE) threads the bilayer. Residue histidine 117 coordinates chlorophyll a. Glutamine 129 lines the pheophytin a pocket. The Cytoplasmic portion of the chain corresponds to 132-140 (IARLVGVRP). Residues 141-160 (YNAIAFSAPIAVFVSVFLIY) traverse the membrane as a helical segment. Asparagine 142 is a pheophytin a binding site. The Lumenal segment spans residues 161–193 (PLGQSSWFFAPSFGVAAIFRFLLFFQGFHNWTL). A helical membrane pass occupies residues 194–217 (NPFHMMGVAGVLGGALLCAIHGAT). Residue histidine 197 coordinates chlorophyll a. A plastoquinone contacts are provided by histidine 214 and phenylalanine 261. Residue histidine 214 coordinates Fe cation. The Cytoplasmic portion of the chain corresponds to 218 to 265 (VENTLFQDGEGASTFRAFNPTQAEETYSMVTANRFWSQIFGIAFSNKR). The helical transmembrane segment at 266-288 (WLHFFMLFVPVTGLWMSAIGVVG) threads the bilayer. Histidine 268 contributes to the Fe cation binding site. Residues 289-352 (LALNLRSYDF…EEVLPRGNAL (64 aa)) lie on the Lumenal side of the membrane.

This sequence belongs to the reaction center PufL/M/PsbA/D family. PSII is composed of 1 copy each of membrane proteins PsbA, PsbB, PsbC, PsbD, PsbE, PsbF, PsbH, PsbI, PsbJ, PsbK, PsbL, PsbM, PsbT, PsbX, PsbY, PsbZ, Psb30/Ycf12, peripheral proteins PsbO, CyanoQ (PsbQ), PsbU, PsbV and a large number of cofactors. It forms dimeric complexes. Part of a photosystem II (PSII) assembly intermediate complex PSII-I; crystallized from a strain deleted of psbJ, it forms monomeric PSII before addition of the oxygen evolving complex. PSII-I includes 3 assembly factors not found in mature PSII (Psb27, Psb28 and Psb34). The cofactor is The D1/D2 heterodimer binds P680, chlorophylls that are the primary electron donor of PSII, and subsequent electron acceptors. It shares a non-heme iron and each subunit binds pheophytin, quinone, additional chlorophylls, carotenoids and lipids. There is also a Cl(-1) ion associated with D1 and D2, which is required for oxygen evolution. PSII binds additional chlorophylls, carotenoids and specific lipids..

Its subcellular location is the cellular thylakoid membrane. The enzyme catalyses 2 a plastoquinone + 4 hnu + 2 H2O = 2 a plastoquinol + O2. Photosystem II (PSII) is a light-driven water:plastoquinone oxidoreductase that uses light energy to abstract electrons from H(2)O, generating O(2) and a proton gradient subsequently used for ATP formation. It consists of a core antenna complex that captures photons, and an electron transfer chain that converts photonic excitation into a charge separation. The D1/D2 (PsbA/PsbD) reaction center heterodimer binds P680, the primary electron donor of PSII as well as several subsequent electron acceptors. D2 is needed for assembly of a stable PSII complex. The chain is Photosystem II D2 protein from Thermosynechococcus vestitus (strain NIES-2133 / IAM M-273 / BP-1).